A 273-amino-acid polypeptide reads, in one-letter code: Methylthioribulose-1-phosphate dehydratase (273 aa).

A disordered region spans residues 1 to 27 (MCPTCPPSAASASSENNNTDNNDHLVL). A substrate-binding site is contributed by Cys-114. Zn(2+)-binding residues include His-132 and His-134. The Proton donor/acceptor role is filled by Glu-168. A Zn(2+)-binding site is contributed by His-225.

This sequence belongs to the aldolase class II family. MtnB subfamily. The cofactor is Zn(2+).

The protein resides in the cytoplasm. It carries out the reaction 5-(methylsulfanyl)-D-ribulose 1-phosphate = 5-methylsulfanyl-2,3-dioxopentyl phosphate + H2O. It participates in amino-acid biosynthesis; L-methionine biosynthesis via salvage pathway; L-methionine from S-methyl-5-thio-alpha-D-ribose 1-phosphate: step 2/6. Functionally, catalyzes the dehydration of methylthioribulose-1-phosphate (MTRu-1-P) into 2,3-diketo-5-methylthiopentyl-1-phosphate (DK-MTP-1-P). This chain is Methylthioribulose-1-phosphate dehydratase, found in Sordaria macrospora (strain ATCC MYA-333 / DSM 997 / K(L3346) / K-hell).